The sequence spans 512 residues: ATP synthase subunit alpha (512 aa).

169–176 (GDRQTGKT) serves as a coordination point for ATP.

This sequence belongs to the ATPase alpha/beta chains family. As to quaternary structure, F-type ATPases have 2 components, CF(1) - the catalytic core - and CF(0) - the membrane proton channel. CF(1) has five subunits: alpha(3), beta(3), gamma(1), delta(1), epsilon(1). CF(0) has three main subunits: a(1), b(2) and c(9-12). The alpha and beta chains form an alternating ring which encloses part of the gamma chain. CF(1) is attached to CF(0) by a central stalk formed by the gamma and epsilon chains, while a peripheral stalk is formed by the delta and b chains.

It localises to the cell membrane. It carries out the reaction ATP + H2O + 4 H(+)(in) = ADP + phosphate + 5 H(+)(out). Its function is as follows. Produces ATP from ADP in the presence of a proton gradient across the membrane. The alpha chain is a regulatory subunit. This is ATP synthase subunit alpha from Elusimicrobium minutum (strain Pei191).